We begin with the raw amino-acid sequence, 862 residues long: Dipeptidyl peptidase 9 (862 aa).

Active-site charge relay system residues include S729, D807, and H839. S729 serves as a coordination point for Val-boroPro.

This sequence belongs to the peptidase S9B family. DPPIV subfamily. Homodimer. Forms a ternary complex with NLRP1, composed of a DPP9 homodimer, one full-length NLRP1 protein, and one cleaved C-terminus of NLRP1 (NACHT, LRR and PYD domains-containing protein 1, C-terminus). Forms a ternary complex with CARD8, composed of a DPP9 homodimer, one full-length NLRP1 protein, and one cleaved C-terminus of CARD8 (Caspase recruitment domain-containing protein 8, C-terminus). In the ternary complex, only one subunit of the DPP9 homodimer is bound to NLRP1 or CARD8. Detected in kidney, skin, brain, thymus and liver (at protein level).

It localises to the cytoplasm. The protein resides in the cytosol. It catalyses the reaction Release of an N-terminal dipeptide, Xaa-Yaa-|-Zaa-, from a polypeptide, preferentially when Yaa is Pro, provided Zaa is neither Pro nor hydroxyproline.. With respect to regulation, inhibited by the serine proteinase inhibitor 4-(2-aminoethyl)benzenesulphonyl fluoride (AEBSF), and by di-isopropylfluorophosphate. Inhibited by Val-boroPro (Talabostat, PT-100), a non-selective inhibitor, which triggers pyroptosis in monocytes and macrophages. Val-boroPro inhibits activity by binding to the active site, mimicking a substrate-bound state, thereby displacing the C-terminal fragment of NLRP1, leading to activation of the NLRP1 inflammasome. In contrast, Val-boroPro does not directly displaces CARD8: it acts by promoting degradation of the N-terminal part of CARD8, leading to indirect disruption of the ternary complex. In terms of biological role, dipeptidyl peptidase that cleaves off N-terminal dipeptides from proteins having a Pro or Ala residue at position 2. Acts as a key inhibitor of caspase-1-dependent monocyte and macrophage pyroptosis in resting cells by preventing activation of NLRP1 and CARD8. Sequesters the cleaved C-terminal part of NLRP1 and CARD8, which respectively constitute the active part of the NLRP1 and CARD8 inflammasomes, in a ternary complex, thereby preventing their oligomerization and activation. The dipeptidyl peptidase activity is required to suppress NLRP1 and CARD8; however, neither NLRP1 nor CARD8 are bona fide substrates of DPP9, suggesting the existence of substrate(s) required for NLRP1 and CARD8 inhibition. The chain is Dipeptidyl peptidase 9 from Mus musculus (Mouse).